A 107-amino-acid chain; its full sequence is MAGRSGDSDEALLQAVRIIKILYQSNPYPKPEGTRQARRNRRRRWRARQRQIHSISERILSTCVGRPAEPVPFQLPPIERLNINCSESGGTSGTQQPQGNTERVGNP.

Residues serine 5 and serine 8 each carry the phosphoserine; by host CK2 modification. The tract at residues 18 to 26 (IIKILYQSN) is homomultimerization. 2 disordered regions span residues 26-50 (NPYP…ARQR) and 82-107 (NINC…VGNP). The Nuclear localization signal and RNA-binding (RRE) motif lies at 34 to 50 (TRQARRNRRRRWRARQR). The segment covering 36–50 (QARRNRRRRWRARQR) has biased composition (basic residues). Positions 73-84 (FQLPPIERLNIN) match the Nuclear export signal and binding to XPO1 motif. The segment covering 86–101 (SESGGTSGTQQPQGNT) has biased composition (low complexity). Serine 92 carries the phosphoserine; by host modification.

The protein belongs to the HIV-1 REV protein family. Homomultimer; when bound to the RRE. Multimeric assembly is essential for activity and may involve XPO1. Binds to human KPNB1, XPO1, TNPO1, RANBP5 and IPO7. Interacts with the viral Integrase. Interacts with human KHDRBS1. Interacts with human NAP1; this interaction decreases Rev multimerization and stimulates its activity. Interacts with human DEAD-box helicases DDX3 and DDX24; these interactions may serve for viral RNA export to the cytoplasm and packaging, respectively. Interacts with human PSIP1; this interaction may inhibit HIV-1 DNA integration by promoting dissociation of the Integrase-LEDGF/p75 complex. Post-translationally, asymmetrically arginine dimethylated at one site by host PRMT6. Methylation impairs the RNA-binding activity and export of viral RNA from the nucleus to the cytoplasm. Phosphorylated by protein kinase CK2. Presence of, and maybe binding to the N-terminus of the regulatory beta subunit of CK2 is necessary for CK2-mediated Rev's phosphorylation.

Its subcellular location is the host nucleus. The protein resides in the host nucleolus. The protein localises to the host cytoplasm. In terms of biological role, escorts unspliced or incompletely spliced viral pre-mRNAs (late transcripts) out of the nucleus of infected cells. These pre-mRNAs carry a recognition sequence called Rev responsive element (RRE) located in the env gene, that is not present in fully spliced viral mRNAs (early transcripts). This function is essential since most viral proteins are translated from unspliced or partially spliced pre-mRNAs which cannot exit the nucleus by the pathway used by fully processed cellular mRNAs. Rev itself is translated from a fully spliced mRNA that readily exits the nucleus. Rev's nuclear localization signal (NLS) binds directly to KPNB1/Importin beta-1 without previous binding to KPNA1/Importin alpha-1. KPNB1 binds to the GDP bound form of RAN (Ran-GDP) and targets Rev to the nucleus. In the nucleus, the conversion from Ran-GDP to Ran-GTP dissociates Rev from KPNB1 and allows Rev's binding to the RRE in viral pre-mRNAs. Rev multimerization on the RRE via cooperative assembly exposes its nuclear export signal (NES) to the surface. Rev can then form a complex with XPO1/CRM1 and Ran-GTP, leading to nuclear export of the complex. Conversion from Ran-GTP to Ran-GDP mediates dissociation of the Rev/RRE/XPO1/RAN complex, so that Rev can return to the nucleus for a subsequent round of export. Beside KPNB1, also seems to interact with TNPO1/Transportin-1, RANBP5/IPO5 and IPO7/RANBP7 for nuclear import. The nucleoporin-like HRB/RIP is an essential cofactor that probably indirectly interacts with Rev to release HIV RNAs from the perinuclear region to the cytoplasm. This is Protein Rev from Human immunodeficiency virus type 1 group M subtype C (isolate 92BR025) (HIV-1).